The chain runs to 572 residues: Proline--tRNA ligase (572 aa).

Belongs to the class-II aminoacyl-tRNA synthetase family. ProS type 1 subfamily. As to quaternary structure, homodimer.

It localises to the cytoplasm. It carries out the reaction tRNA(Pro) + L-proline + ATP = L-prolyl-tRNA(Pro) + AMP + diphosphate. Its function is as follows. Catalyzes the attachment of proline to tRNA(Pro) in a two-step reaction: proline is first activated by ATP to form Pro-AMP and then transferred to the acceptor end of tRNA(Pro). As ProRS can inadvertently accommodate and process non-cognate amino acids such as alanine and cysteine, to avoid such errors it has two additional distinct editing activities against alanine. One activity is designated as 'pretransfer' editing and involves the tRNA(Pro)-independent hydrolysis of activated Ala-AMP. The other activity is designated 'posttransfer' editing and involves deacylation of mischarged Ala-tRNA(Pro). The misacylated Cys-tRNA(Pro) is not edited by ProRS. This Escherichia coli O139:H28 (strain E24377A / ETEC) protein is Proline--tRNA ligase.